A 218-amino-acid chain; its full sequence is MPAKLGYWKIRGLQQPVRLFLEYLGEEYEEHLYGRNDREKWLGDKFNMGLDLPNLPYYIDDKCKLTQSVAIMRYIADKHGMLGSTPEERARISMIEGAAMDLRIGFGLTCYNPKFEELKGDYLKGLPTTLKMWSDFLGDRQYLIGSSVSHVDFMVYEALDCIRYLAPQCLDDFPKLKEFKSRIEDLPKIKEYMKSERFIKWPLHSWTSPFGGGDAPPA.

Residues 2-83 (PAKLGYWKIR…YIADKHGMLG (82 aa)) form the GST N-terminal domain. Residues 7–8 (YW), 41–45 (WLGDK), 54–55 (NL), and 67–68 (QS) contribute to the glutathione site. The region spanning 85–203 (TPEERARISM…KSERFIKWPL (119 aa)) is the GST C-terminal domain. Substrate is bound at residue Tyr-111.

Belongs to the GST superfamily. Mu family. Homodimer.

It catalyses the reaction RX + glutathione = an S-substituted glutathione + a halide anion + H(+). In terms of biological role, conjugation of reduced glutathione to a wide number of exogenous and endogenous hydrophobic electrophiles. Its function is as follows. GST isoenzymes appear to play a central role in the parasite detoxification system. Other functions are also suspected including a role in increasing the solubility of haematin in the parasite gut. This chain is Glutathione S-transferase class-mu 26 kDa isozyme 7, found in Fasciola hepatica (Liver fluke).